A 213-amino-acid chain; its full sequence is Orotate phosphoribosyltransferase (213 aa).

Lysine 26 serves as a coordination point for 5-phospho-alpha-D-ribose 1-diphosphate. An orotate-binding site is contributed by 34 to 35; sequence FF. 5-phospho-alpha-D-ribose 1-diphosphate-binding positions include 72-73, arginine 99, lysine 100, lysine 103, histidine 105, and 124-132; these read YK and DDVITAGTA. 2 residues coordinate orotate: threonine 128 and arginine 156.

This sequence belongs to the purine/pyrimidine phosphoribosyltransferase family. PyrE subfamily. As to quaternary structure, homodimer. Requires Mg(2+) as cofactor.

It carries out the reaction orotidine 5'-phosphate + diphosphate = orotate + 5-phospho-alpha-D-ribose 1-diphosphate. It participates in pyrimidine metabolism; UMP biosynthesis via de novo pathway; UMP from orotate: step 1/2. Its function is as follows. Catalyzes the transfer of a ribosyl phosphate group from 5-phosphoribose 1-diphosphate to orotate, leading to the formation of orotidine monophosphate (OMP). This is Orotate phosphoribosyltransferase from Photobacterium profundum (strain SS9).